The following is a 526-amino-acid chain: Maturase K (526 aa).

The protein belongs to the intron maturase 2 family. MatK subfamily.

It is found in the plastid. It localises to the chloroplast. Functionally, usually encoded in the trnK tRNA gene intron. Probably assists in splicing its own and other chloroplast group II introns. The polypeptide is Maturase K (Iris setosa (Hiougi-ayame)).